Reading from the N-terminus, the 378-residue chain is UDP-N-acetylglucosamine--N-acetylmuramyl-(pentapeptide) pyrophosphoryl-undecaprenol N-acetylglucosamine transferase (378 aa).

Residues 14 to 16 (TGG), Asn-125, Arg-165, Ser-193, and Gln-293 contribute to the UDP-N-acetyl-alpha-D-glucosamine site.

It belongs to the glycosyltransferase 28 family. MurG subfamily.

Its subcellular location is the cell inner membrane. The enzyme catalyses di-trans,octa-cis-undecaprenyl diphospho-N-acetyl-alpha-D-muramoyl-L-alanyl-D-glutamyl-meso-2,6-diaminopimeloyl-D-alanyl-D-alanine + UDP-N-acetyl-alpha-D-glucosamine = di-trans,octa-cis-undecaprenyl diphospho-[N-acetyl-alpha-D-glucosaminyl-(1-&gt;4)]-N-acetyl-alpha-D-muramoyl-L-alanyl-D-glutamyl-meso-2,6-diaminopimeloyl-D-alanyl-D-alanine + UDP + H(+). It functions in the pathway cell wall biogenesis; peptidoglycan biosynthesis. Functionally, cell wall formation. Catalyzes the transfer of a GlcNAc subunit on undecaprenyl-pyrophosphoryl-MurNAc-pentapeptide (lipid intermediate I) to form undecaprenyl-pyrophosphoryl-MurNAc-(pentapeptide)GlcNAc (lipid intermediate II). The sequence is that of UDP-N-acetylglucosamine--N-acetylmuramyl-(pentapeptide) pyrophosphoryl-undecaprenol N-acetylglucosamine transferase from Bartonella tribocorum (strain CIP 105476 / IBS 506).